Reading from the N-terminus, the 548-residue chain is Chaperonin GroEL (548 aa).

Residues 29-32 (TLGP), 86-90 (DGTTT), Gly-413, 476-478 (NAL), and Asp-492 contribute to the ATP site. The span at 522-531 (PDEDDNDDGD) shows a compositional bias: acidic residues. Residues 522–548 (PDEDDNDDGDMGGGAPGMGGMGGMPGM) are disordered. Over residues 532-548 (MGGGAPGMGGMGGMPGM) the composition is skewed to gly residues.

The protein belongs to the chaperonin (HSP60) family. As to quaternary structure, forms a cylinder of 14 subunits composed of two heptameric rings stacked back-to-back. Interacts with the co-chaperonin GroES.

It localises to the cytoplasm. The enzyme catalyses ATP + H2O + a folded polypeptide = ADP + phosphate + an unfolded polypeptide.. Functionally, together with its co-chaperonin GroES, plays an essential role in assisting protein folding. The GroEL-GroES system forms a nano-cage that allows encapsulation of the non-native substrate proteins and provides a physical environment optimized to promote and accelerate protein folding. The polypeptide is Chaperonin GroEL (Natranaerobius thermophilus (strain ATCC BAA-1301 / DSM 18059 / JW/NM-WN-LF)).